Consider the following 275-residue polypeptide: Exosome complex component RRP40 (275 aa).

N-acetylalanine is present on alanine 2. Lysine 151 participates in a covalent cross-link: Glycyl lysine isopeptide (Lys-Gly) (interchain with G-Cter in SUMO2).

The protein belongs to the RRP40 family. In terms of assembly, component of the RNA exosome core complex (Exo-9), composed of EXOSC1, EXOSC2, EXOSC3, EXOSC4, EXOSC5, EXOSC6, EXOSC7, EXOSC8 and EXOSC9; within the complex interacts with EXOSC5 and EXOSC9. The catalytically inactive RNA exosome core complex (Exo-9) associates with the catalytic subunit EXOSC10/RRP6. Exo-9 may associate with DIS3 to form the nucleolar exosome complex, or DIS3L to form the cytoplasmic exosome complex. Exo-9 is formed by a hexameric base ring consisting of the heterodimers EXOSC4-EXOSC9, EXOSC5-EXOSC8 and EXOSC6-EXOSC7, and a cap ring consisting of EXOSC1, EXOSC2 and EXOSC3. The RNA exosome complex associates with cofactors C1D/RRP47, MPHOSPH6/MPP6 and MTREX/MTR4. Interacts with MPHOSPH6/MPP6; the interaction is direct. Interacts with GTPBP1. Interacts with ZC3HAV1. Interacts with DDX17 only in the presence of ZC3HAV1 in an RNA-independent manner. Interacts with DHX36; this interaction occurs in a RNase-insensitive manner. Interacts with HBS1L isoform 2.

It is found in the cytoplasm. Its subcellular location is the nucleus. The protein resides in the nucleolus. Its function is as follows. Non-catalytic component of the RNA exosome complex which has 3'-&gt;5' exoribonuclease activity and participates in a multitude of cellular RNA processing and degradation events. In the nucleus, the RNA exosome complex is involved in proper maturation of stable RNA species such as rRNA, snRNA and snoRNA, in the elimination of RNA processing by-products and non-coding 'pervasive' transcripts, such as antisense RNA species and promoter-upstream transcripts (PROMPTs), and of mRNAs with processing defects, thereby limiting or excluding their export to the cytoplasm. The RNA exosome may be involved in Ig class switch recombination (CSR) and/or Ig variable region somatic hypermutation (SHM) by targeting AICDA deamination activity to transcribed dsDNA substrates. In the cytoplasm, the RNA exosome complex is involved in general mRNA turnover and specifically degrades inherently unstable mRNAs containing AU-rich elements (AREs) within their 3' untranslated regions, and in RNA surveillance pathways, preventing translation of aberrant mRNAs. It seems to be involved in degradation of histone mRNA. The catalytic inactive RNA exosome core complex of 9 subunits (Exo-9) is proposed to play a pivotal role in the binding and presentation of RNA for ribonucleolysis, and to serve as a scaffold for the association with catalytic subunits and accessory proteins or complexes. EXOSC3 as peripheral part of the Exo-9 complex stabilizes the hexameric ring of RNase PH-domain subunits through contacts with EXOSC9 and EXOSC5. The chain is Exosome complex component RRP40 (EXOSC3) from Bos taurus (Bovine).